Consider the following 255-residue polypeptide: DNA repair protein RecO (255 aa).

It belongs to the RecO family.

Functionally, involved in DNA repair and RecF pathway recombination. This is DNA repair protein RecO from Acidithiobacillus ferrooxidans (strain ATCC 23270 / DSM 14882 / CIP 104768 / NCIMB 8455) (Ferrobacillus ferrooxidans (strain ATCC 23270)).